Reading from the N-terminus, the 290-residue chain is S-methyl-5'-thioadenosine phosphorylase (290 aa).

Phosphate contacts are provided by residues serine 11, 53–54 (RH), and 86–87 (SA). Methionine 184 is a binding site for substrate. Residue threonine 185 participates in phosphate binding. Substrate is bound at residue 208–210 (DYD).

This sequence belongs to the PNP/MTAP phosphorylase family. MTAP subfamily. As to quaternary structure, homohexamer. Dimer of a homotrimer.

The enzyme catalyses S-methyl-5'-thioadenosine + phosphate = 5-(methylsulfanyl)-alpha-D-ribose 1-phosphate + adenine. It functions in the pathway amino-acid biosynthesis; L-methionine biosynthesis via salvage pathway; S-methyl-5-thio-alpha-D-ribose 1-phosphate from S-methyl-5'-thioadenosine (phosphorylase route): step 1/1. Functionally, catalyzes the reversible phosphorylation of S-methyl-5'-thioadenosine (MTA) to adenine and 5-methylthioribose-1-phosphate. Involved in the breakdown of MTA, a major by-product of polyamine biosynthesis. Responsible for the first step in the methionine salvage pathway after MTA has been generated from S-adenosylmethionine. Has broad substrate specificity with 6-aminopurine nucleosides as preferred substrates. The sequence is that of S-methyl-5'-thioadenosine phosphorylase from Cereibacter sphaeroides (strain ATCC 17023 / DSM 158 / JCM 6121 / CCUG 31486 / LMG 2827 / NBRC 12203 / NCIMB 8253 / ATH 2.4.1.) (Rhodobacter sphaeroides).